A 306-amino-acid chain; its full sequence is Aspartate carbamoyltransferase catalytic subunit (306 aa).

Residues R54 and T55 each coordinate carbamoyl phosphate. K83 lines the L-aspartate pocket. Positions 104, 132, and 135 each coordinate carbamoyl phosphate. L-aspartate-binding residues include R165 and R227. Carbamoyl phosphate is bound by residues L266 and P267.

The protein belongs to the aspartate/ornithine carbamoyltransferase superfamily. ATCase family. As to quaternary structure, heterododecamer (2C3:3R2) of six catalytic PyrB chains organized as two trimers (C3), and six regulatory PyrI chains organized as three dimers (R2).

The enzyme catalyses carbamoyl phosphate + L-aspartate = N-carbamoyl-L-aspartate + phosphate + H(+). The protein operates within pyrimidine metabolism; UMP biosynthesis via de novo pathway; (S)-dihydroorotate from bicarbonate: step 2/3. Catalyzes the condensation of carbamoyl phosphate and aspartate to form carbamoyl aspartate and inorganic phosphate, the committed step in the de novo pyrimidine nucleotide biosynthesis pathway. This is Aspartate carbamoyltransferase catalytic subunit from Clostridium kluyveri (strain NBRC 12016).